The following is a 385-amino-acid chain: Meiotic recombination protein SPO11-2 (385 aa).

Residues 24–169 (LPPAEVRARI…LGIMASSRGA (146 aa)) enclose the Topo IIA-type catalytic domain. Y126 acts as the O-(5'-phospho-DNA)-tyrosine intermediate in catalysis. Residues E219 and D272 each contribute to the Mg(2+) site.

It belongs to the TOP6A family. Interacts with TOP6B. It depends on Mg(2+) as a cofactor.

The protein resides in the nucleus. The enzyme catalyses ATP-dependent breakage, passage and rejoining of double-stranded DNA.. In terms of biological role, required for meiotic recombination. Mediates DNA cleavage that forms the double-strand breaks (DSB) that initiate meiotic recombination. The chain is Meiotic recombination protein SPO11-2 (SPO11-2) from Oryza sativa subsp. japonica (Rice).